The sequence spans 954 residues: Glucosidase 2 subunit alpha (954 aa).

An N-terminal signal peptide occupies residues 1-22 (MVLLKWLVCQLVFFTAFSHAFT). 5 N-linked (GlcNAc...) asparagine glycosylation sites follow: N114, N126, N142, N173, and N345. The active-site Nucleophile is D537. Residue E540 is part of the active site. D614 serves as the catalytic Proton donor. N783, N791, N867, N880, N907, and N941 each carry an N-linked (GlcNAc...) asparagine glycan.

The protein belongs to the glycosyl hydrolase 31 family. In terms of assembly, heterodimer of a catalytic subunit alpha (ROT2) and a subunit beta (GTB1).

Its subcellular location is the endoplasmic reticulum. The catalysed reaction is N(4)-(alpha-D-Glc-(1-&gt;3)-alpha-D-Man-(1-&gt;2)-alpha-D-Man-(1-&gt;2)-alpha-D-Man-(1-&gt;3)-[alpha-D-Man-(1-&gt;2)-alpha-D-Man-(1-&gt;3)-[alpha-D-Man-(1-&gt;2)-alpha-D-Man-(1-&gt;6)]-alpha-D-Man-(1-&gt;6)]-beta-D-Man-(1-&gt;4)-beta-D-GlcNAc-(1-&gt;4)-beta-D-GlcNAc)-L-asparaginyl-[protein] + H2O = N(4)-(alpha-D-Man-(1-&gt;2)-alpha-D-Man-(1-&gt;2)-alpha-D-Man-(1-&gt;3)-[alpha-D-Man-(1-&gt;2)-alpha-D-Man-(1-&gt;3)-[alpha-D-Man-(1-&gt;2)-alpha-D-Man-(1-&gt;6)]-alpha-D-Man-(1-&gt;6)]-beta-D-Man-(1-&gt;4)-beta-D-GlcNAc-(1-&gt;4)-beta-D-GlcNAc)-L-asparaginyl-[protein] (N-glucan mannose isomer 9A1,2,3B1,2,3) + beta-D-glucose. It carries out the reaction N(4)-(alpha-D-Glc-(1-&gt;3)-alpha-D-Glc-(1-&gt;3)-alpha-D-Man-(1-&gt;2)-alpha-D-Man-(1-&gt;2)-alpha-D-Man-(1-&gt;3)-[alpha-D-Man-(1-&gt;2)-alpha-D-Man-(1-&gt;3)-[alpha-D-Man-(1-&gt;2)-alpha-D-Man-(1-&gt;6)]-alpha-D-Man-(1-&gt;6)]-beta-D-Man-(1-&gt;4)-beta-D-GlcNAc-(1-&gt;4)-beta-D-GlcNAc)-L-asparaginyl-[protein] + H2O = N(4)-(alpha-D-Glc-(1-&gt;3)-alpha-D-Man-(1-&gt;2)-alpha-D-Man-(1-&gt;2)-alpha-D-Man-(1-&gt;3)-[alpha-D-Man-(1-&gt;2)-alpha-D-Man-(1-&gt;3)-[alpha-D-Man-(1-&gt;2)-alpha-D-Man-(1-&gt;6)]-alpha-D-Man-(1-&gt;6)]-beta-D-Man-(1-&gt;4)-beta-D-GlcNAc-(1-&gt;4)-beta-D-GlcNAc)-L-asparaginyl-[protein] + beta-D-glucose. Its pathway is glycan metabolism; N-glycan metabolism. Inhibited by glucose, maltose and nigerose, and by the antibiotic deoxynojirimycin. In terms of biological role, catalytic subunit of glucosidase 2, which cleaves sequentially the 2 innermost alpha-1,3-linked glucose residues from the Glc(2)Man(9)GlcNAc(2) oligosaccharide precursor of immature glycoproteins. The protein is Glucosidase 2 subunit alpha (ROT2) of Saccharomyces cerevisiae (strain ATCC 204508 / S288c) (Baker's yeast).